The sequence spans 518 residues: Ribonuclease Y (518 aa).

Residues 2–22 (GSIIISALLALVIGAVVGFFV) traverse the membrane as a helical segment. Residues 208-271 (TVSVVNLPND…ETARIALDKL (64 aa)) enclose the KH domain. The HD domain occupies 334–427 (VLKHSVEVAF…VAAADALSAA (94 aa)).

This sequence belongs to the RNase Y family.

The protein resides in the cell membrane. Endoribonuclease that initiates mRNA decay. The polypeptide is Ribonuclease Y (Geobacillus thermodenitrificans (strain NG80-2)).